The sequence spans 363 residues: Bonnadiene synthase (363 aa).

Residues D93, D98, N234, S238, and E242 each contribute to the Mg(2+) site.

It belongs to the terpene synthase family. Requires Mg(2+) as cofactor.

The enzyme catalyses (2E,6E,10E)-geranylgeranyl diphosphate = bonnadiene + diphosphate. Its pathway is secondary metabolite biosynthesis; terpenoid biosynthesis. Its function is as follows. Diterpene synthase that catalyzes the conversion of geranylgeranyl diphosphate (GGPP) to bonnadiene. Cannot use geranyl diphosphate (GPP), farnesyl diphosphate (FPP) and geranylfarnesyl diphosphate (GFPP). The sequence is that of Bonnadiene synthase from Allokutzneria albata (Kibdelosporangium albatum).